We begin with the raw amino-acid sequence, 396 residues long: Elongation factor Tu (396 aa).

A tr-type G domain is found at 10 to 206; it reads KPHVNIGTIG…AVDEYIPTPQ (197 aa). Residues 19–26 are G1; that stretch reads GHVDHGKT. 19-26 is a GTP binding site; the sequence is GHVDHGKT. A Mg(2+)-binding site is contributed by Thr26. The segment at 60 to 64 is G2; sequence GITIS. The tract at residues 81–84 is G3; that stretch reads DCPG. GTP is bound by residues 81-85 and 136-139; these read DCPGH and NKVD. The tract at residues 136–139 is G4; that stretch reads NKVD. A G5 region spans residues 174–176; it reads SAL.

Belongs to the TRAFAC class translation factor GTPase superfamily. Classic translation factor GTPase family. EF-Tu/EF-1A subfamily. Monomer.

It is found in the cytoplasm. The enzyme catalyses GTP + H2O = GDP + phosphate + H(+). In terms of biological role, GTP hydrolase that promotes the GTP-dependent binding of aminoacyl-tRNA to the A-site of ribosomes during protein biosynthesis. This chain is Elongation factor Tu, found in Stigmatella aurantiaca.